The following is a 382-amino-acid chain: Na(+)/H(+) antiporter NhaA 2 (382 aa).

Transmembrane regions (helical) follow at residues 11–31, 45–65, 91–111, 116–136, 145–165, 171–191, 197–214, 287–307, 324–344, and 353–373; these read FSVP…LDPA, LSFH…IAAV, LGGV…VGLP, GWGI…RMVF, YLLL…ALFY, PVVA…WGLG, SYWP…IGLH, WLVL…FGLL, LLVA…VSGS, and AAAK…MLLG.

It belongs to the NhaA Na(+)/H(+) (TC 2.A.33) antiporter family.

The protein resides in the cell inner membrane. The catalysed reaction is Na(+)(in) + 2 H(+)(out) = Na(+)(out) + 2 H(+)(in). In terms of biological role, na(+)/H(+) antiporter that extrudes sodium in exchange for external protons. The sequence is that of Na(+)/H(+) antiporter NhaA 2 from Pelobacter propionicus (strain DSM 2379 / NBRC 103807 / OttBd1).